The following is a 514-amino-acid chain: ATP synthase subunit alpha (514 aa).

170–177 (GDRQIGKT) contacts ATP.

Belongs to the ATPase alpha/beta chains family. F-type ATPases have 2 components, CF(1) - the catalytic core - and CF(0) - the membrane proton channel. CF(1) has five subunits: alpha(3), beta(3), gamma(1), delta(1), epsilon(1). CF(0) has three main subunits: a(1), b(2) and c(9-12). The alpha and beta chains form an alternating ring which encloses part of the gamma chain. CF(1) is attached to CF(0) by a central stalk formed by the gamma and epsilon chains, while a peripheral stalk is formed by the delta and b chains.

It is found in the cell inner membrane. The catalysed reaction is ATP + H2O + 4 H(+)(in) = ADP + phosphate + 5 H(+)(out). Functionally, produces ATP from ADP in the presence of a proton gradient across the membrane. The alpha chain is a regulatory subunit. The protein is ATP synthase subunit alpha of Pseudomonas putida (strain GB-1).